Consider the following 173-residue polypeptide: Crossover junction endodeoxyribonuclease RuvC (173 aa).

Residues Asp8, Glu67, and Asp139 contribute to the active site. Mg(2+) is bound by residues Asp8, Glu67, and Asp139.

Belongs to the RuvC family. As to quaternary structure, homodimer which binds Holliday junction (HJ) DNA. The HJ becomes 2-fold symmetrical on binding to RuvC with unstacked arms; it has a different conformation from HJ DNA in complex with RuvA. In the full resolvosome a probable DNA-RuvA(4)-RuvB(12)-RuvC(2) complex forms which resolves the HJ. Requires Mg(2+) as cofactor.

It is found in the cytoplasm. The catalysed reaction is Endonucleolytic cleavage at a junction such as a reciprocal single-stranded crossover between two homologous DNA duplexes (Holliday junction).. Its function is as follows. The RuvA-RuvB-RuvC complex processes Holliday junction (HJ) DNA during genetic recombination and DNA repair. Endonuclease that resolves HJ intermediates. Cleaves cruciform DNA by making single-stranded nicks across the HJ at symmetrical positions within the homologous arms, yielding a 5'-phosphate and a 3'-hydroxyl group; requires a central core of homology in the junction. The consensus cleavage sequence is 5'-(A/T)TT(C/G)-3'. Cleavage occurs on the 3'-side of the TT dinucleotide at the point of strand exchange. HJ branch migration catalyzed by RuvA-RuvB allows RuvC to scan DNA until it finds its consensus sequence, where it cleaves and resolves the cruciform DNA. The protein is Crossover junction endodeoxyribonuclease RuvC of Vibrio cholerae serotype O1 (strain ATCC 39541 / Classical Ogawa 395 / O395).